A 390-amino-acid chain; its full sequence is Levoglucosan dehydrogenase (390 aa).

Positions 13, 14, 43, 81, 83, 86, 103, 104, 130, and 132 each coordinate NADH. K104 contacts levoglucosan. Levoglucosan is bound by residues Y133 and Q163. 2 residues coordinate NADH: W175 and R176. The levoglucosan site is built by R176, D189, and H193. Y335 serves as a coordination point for NADH.

This sequence belongs to the Gfo/Idh/MocA family. Homotetramer.

The catalysed reaction is levoglucosan + NAD(+) = 3-dehydrolevoglucosan + NADH + H(+). Its function is as follows. Catalyzes the oxidation of levoglucosan (1,6-anhydro-beta-D-glucose, LG) to 3-dehydrolevoglucosan (3-keto-LG). Exhibits high substrate specificity toward levoglucosan and NAD(+) for the oxidative reaction. Exhibits weak activities (about 4% compared with that of LG) toward L-sorbose and 1,5-anhydro-D-glucitol, and activity toward D-xylose is also detectable (1.7%). Can also efficiently catalyzes the NADH-dependent reduction (reverse reaction) of 3-keto-LG. In Pseudarthrobacter phenanthrenivorans (strain DSM 18606 / JCM 16027 / LMG 23796 / Sphe3) (Arthrobacter phenanthrenivorans), this protein is Levoglucosan dehydrogenase.